The following is a 76-amino-acid chain: Adropin (76 aa).

Residues 1–33 (MGAAISQGALIAIVCNGLVGFLLLLLWVILCWA) form the signal peptide. Residues 41–76 (VDSLSESSPNSSPGPCPEKAPPPQKPSHEGSYLLQP) are disordered. Over residues 52–65 (SPGPCPEKAPPPQK) the composition is skewed to pro residues.

Expressed in liver and brain.

It is found in the secreted. In terms of biological role, involved in the regulation of glucose homeostasis and lipid metabolism. The chain is Adropin (ENHO) from Homo sapiens (Human).